The sequence spans 328 residues: Phosphate acyltransferase (328 aa).

It belongs to the PlsX family. Homodimer. Probably interacts with PlsY.

The protein resides in the cytoplasm. It catalyses the reaction a fatty acyl-[ACP] + phosphate = an acyl phosphate + holo-[ACP]. It participates in lipid metabolism; phospholipid metabolism. Functionally, catalyzes the reversible formation of acyl-phosphate (acyl-PO(4)) from acyl-[acyl-carrier-protein] (acyl-ACP). This enzyme utilizes acyl-ACP as fatty acyl donor, but not acyl-CoA. This chain is Phosphate acyltransferase, found in Geobacillus thermodenitrificans (strain NG80-2).